We begin with the raw amino-acid sequence, 73 residues long: UPF0270 protein PMI2817 (73 aa).

Belongs to the UPF0270 family.

This is UPF0270 protein PMI2817 from Proteus mirabilis (strain HI4320).